The sequence spans 196 residues: HTH-type transcriptional regulator BetI (196 aa).

One can recognise an HTH tetR-type domain in the interval 8–68; the sequence is PIRRSQLIAA…ATMRHLMQAL (61 aa). Positions 31–50 form a DNA-binding region, H-T-H motif; the sequence is SIAYIARLAGVSNGIISHYF.

It participates in amine and polyamine biosynthesis; betaine biosynthesis via choline pathway [regulation]. Its function is as follows. Repressor involved in the biosynthesis of the osmoprotectant glycine betaine. It represses transcription of the choline transporter BetT and the genes of BetAB involved in the synthesis of glycine betaine. The protein is HTH-type transcriptional regulator BetI of Ectopseudomonas mendocina (strain ymp) (Pseudomonas mendocina).